We begin with the raw amino-acid sequence, 192 residues long: Protein MTH_857 (192 aa).

In terms of domain architecture, AMMECR1 spans 9–192; sequence DEGRTLVKIA…FQAQIFHEDG (184 aa).

This Methanothermobacter thermautotrophicus (strain ATCC 29096 / DSM 1053 / JCM 10044 / NBRC 100330 / Delta H) (Methanobacterium thermoautotrophicum) protein is Protein MTH_857.